Here is a 504-residue protein sequence, read N- to C-terminus: Maturase K (504 aa).

The protein belongs to the intron maturase 2 family. MatK subfamily.

Its subcellular location is the plastid. The protein localises to the chloroplast. Usually encoded in the trnK tRNA gene intron. Probably assists in splicing its own and other chloroplast group II introns. The protein is Maturase K of Arabidopsis lyrata (Lyre-leaved rock-cress).